Reading from the N-terminus, the 124-residue chain is Large ribosomal subunit protein bL19 (124 aa).

The protein belongs to the bacterial ribosomal protein bL19 family.

Its function is as follows. This protein is located at the 30S-50S ribosomal subunit interface and may play a role in the structure and function of the aminoacyl-tRNA binding site. The protein is Large ribosomal subunit protein bL19 of Cereibacter sphaeroides (strain ATCC 17029 / ATH 2.4.9) (Rhodobacter sphaeroides).